The primary structure comprises 164 residues: Succinate dehydrogenase assembly factor 2, mitochondrial (164 aa).

A mitochondrion-targeting transit peptide spans 1-27 (MAVVTLIPTLARVLSKHSLLSPLLSVT).

It belongs to the SDHAF2 family. In terms of assembly, interacts with SDHA within the SDH catalytic dimer.

Its subcellular location is the mitochondrion matrix. Functionally, plays an essential role in the assembly of succinate dehydrogenase (SDH), an enzyme complex (also referred to as respiratory complex II) that is a component of both the tricarboxylic acid (TCA) cycle and the mitochondrial electron transport chain, and which couples the oxidation of succinate to fumarate with the reduction of ubiquinone (coenzyme Q) to ubiquinol. Required for flavinylation (covalent attachment of FAD) of the flavoprotein subunit SDHA of the SDH catalytic dimer. This Rattus norvegicus (Rat) protein is Succinate dehydrogenase assembly factor 2, mitochondrial.